The chain runs to 227 residues: UPF0173 metal-dependent hydrolase Oter_4201 (227 aa).

It belongs to the UPF0173 family.

This Opitutus terrae (strain DSM 11246 / JCM 15787 / PB90-1) protein is UPF0173 metal-dependent hydrolase Oter_4201.